The primary structure comprises 226 residues: Ribonuclease 3 (226 aa).

Residues 6-128 (INRLQRKLGY…LIGGVFLDSN (123 aa)) form the RNase III domain. Position 41 (E41) interacts with Mg(2+). D45 is an active-site residue. 2 residues coordinate Mg(2+): D114 and E117. E117 is an active-site residue. The DRBM domain maps to 155-225 (DPKTRLQEYL…AEQALKKLEL (71 aa)).

It belongs to the ribonuclease III family. Homodimer. It depends on Mg(2+) as a cofactor.

It is found in the cytoplasm. It carries out the reaction Endonucleolytic cleavage to 5'-phosphomonoester.. Digests double-stranded RNA. Involved in the processing of primary rRNA transcript to yield the immediate precursors to the large and small rRNAs (23S and 16S). Processes some mRNAs, and tRNAs when they are encoded in the rRNA operon. Processes pre-crRNA and tracrRNA of type II CRISPR loci if present in the organism. The protein is Ribonuclease 3 of Salmonella enteritidis PT4 (strain P125109).